The following is a 95-amino-acid chain: Phosphoribosyl-ATP pyrophosphatase (95 aa).

This sequence belongs to the PRA-PH family.

Its subcellular location is the cytoplasm. The enzyme catalyses 1-(5-phospho-beta-D-ribosyl)-ATP + H2O = 1-(5-phospho-beta-D-ribosyl)-5'-AMP + diphosphate + H(+). It functions in the pathway amino-acid biosynthesis; L-histidine biosynthesis; L-histidine from 5-phospho-alpha-D-ribose 1-diphosphate: step 2/9. The polypeptide is Phosphoribosyl-ATP pyrophosphatase (Methanosphaera stadtmanae (strain ATCC 43021 / DSM 3091 / JCM 11832 / MCB-3)).